The sequence spans 293 residues: Elongation factor Ts (293 aa).

The tract at residues 80–83 is involved in Mg(2+) ion dislocation from EF-Tu; that stretch reads TDFV.

Belongs to the EF-Ts family.

The protein resides in the cytoplasm. Its function is as follows. Associates with the EF-Tu.GDP complex and induces the exchange of GDP to GTP. It remains bound to the aminoacyl-tRNA.EF-Tu.GTP complex up to the GTP hydrolysis stage on the ribosome. The sequence is that of Elongation factor Ts from Paraburkholderia phytofirmans (strain DSM 17436 / LMG 22146 / PsJN) (Burkholderia phytofirmans).